The chain runs to 419 residues: Histidine--tRNA ligase (419 aa).

The protein belongs to the class-II aminoacyl-tRNA synthetase family. In terms of assembly, homodimer.

It is found in the cytoplasm. The catalysed reaction is tRNA(His) + L-histidine + ATP = L-histidyl-tRNA(His) + AMP + diphosphate + H(+). The sequence is that of Histidine--tRNA ligase from Thiobacillus denitrificans (strain ATCC 25259 / T1).